The primary structure comprises 195 residues: E3 ubiquitin-protein ligase ZNRF1 (195 aa).

Polar residues predominate over residues 1-10; the sequence is MGGKQSSASR. The interval 1 to 37 is disordered; sequence MGGKQSSASRSRAPFPGVSSDDSAVPPSSNFGHFRGG. The N-myristoyl glycine moiety is linked to residue Gly-2. Low complexity predominate over residues 18 to 29; sequence VSSDDSAVPPSS. The RING-type; atypical zinc finger occupies 152–193; it reads CVICLEELSQGDTIARLPCLCIYHKSCIDSWFEVNRCCPEHP.

The protein resides in the endosome. Its subcellular location is the lysosome. The protein localises to the membrane. It catalyses the reaction S-ubiquitinyl-[E2 ubiquitin-conjugating enzyme]-L-cysteine + [acceptor protein]-L-lysine = [E2 ubiquitin-conjugating enzyme]-L-cysteine + N(6)-ubiquitinyl-[acceptor protein]-L-lysine.. It functions in the pathway protein modification; protein ubiquitination. Its function is as follows. E3 ubiquitin-protein ligase that plays a role in neuron cells differentiation. Plays a role in the establishment and maintenance of neuronal transmission and plasticity. This chain is E3 ubiquitin-protein ligase ZNRF1 (znrf1), found in Xenopus laevis (African clawed frog).